We begin with the raw amino-acid sequence, 133 residues long: Fluoride-specific ion channel FluC (133 aa).

Helical transmembrane passes span 3–23 (AVVW…GSGL), 41–61 (WGTL…LIWV), 76–96 (IVGL…CLVF), and 103–123 (LIVG…VFLG). Positions 81 and 84 each coordinate Na(+).

This sequence belongs to the fluoride channel Fluc/FEX (TC 1.A.43) family.

The protein resides in the cell inner membrane. The enzyme catalyses fluoride(in) = fluoride(out). With respect to regulation, na(+) is not transported, but it plays an essential structural role and its presence is essential for fluoride channel function. Functionally, fluoride-specific ion channel. Important for reducing fluoride concentration in the cell, thus reducing its toxicity. The protein is Fluoride-specific ion channel FluC of Xylella fastidiosa (strain M23).